The sequence spans 519 residues: uncharacterized protein (519 aa).

The next 11 helical transmembrane spans lie at 52 to 72, 86 to 106, 119 to 139, 156 to 176, 199 to 219, 231 to 251, 313 to 333, 343 to 363, 374 to 394, 408 to 430, and 477 to 497; these read IYFL…VRGS, LATY…SPIV, TWVV…SYNV, WSFL…GWSL, FFLS…NTFI, LSGY…LVCF, MLSL…VYTG, IWLK…ILVY, VFFP…IQFV, IGGT…PQYV, and TSIV…TPVV.

It localises to the membrane. This is an uncharacterized protein from Schizosaccharomyces pombe (strain 972 / ATCC 24843) (Fission yeast).